The following is a 150-amino-acid chain: Clitocypin (150 aa).

Belongs to the protease inhibitor I48 family. As to quaternary structure, homodimer. Uniformly expressed throughout the mature fruiting body (at mRNA and protein level).

In terms of biological role, binds and inhibits cysteine proteinases. Inhibits most strongly papain and cathepsin L, more weakly bromelain and cathepsin B while it is completely ineffective against cathepsin H. The chain is Clitocypin (Cnc1) from Clitocybe nebularis (Clouded agaric).